Reading from the N-terminus, the 228-residue chain is Transcription repressor OFP8 (228 aa).

Composition is skewed to low complexity over residues 1-14, 54-79, and 92-101; these read MSGR…FSLR, ASST…TDSS, and EEPAAAQQEQ. Disordered regions lie at residues 1-21 and 36-143; these read MSGR…VVDI and SSSS…QLQE. Positions 107–120 are enriched in basic residues; it reads RRRRRQQRRRRRRA. The 60-residue stretch at 157–216 folds into the OVATE domain; sequence VAVESAEPYEDFRESMVQMVVEKEIYAWDDLNDLLHQFLSLNSPRHHPLILHAFADLWTR.

As to quaternary structure, interacts with GSK2. Phosphorylated on serine and threonine residues by GSK2. Dephosphorylated during response to brassinosteroid. Expressed in roots, stems, stem nodes, young leaves, leaf sheaths, lamina joints, young spikelets, inflorescences, stamens and ovaries, embryos and seeds.

The protein localises to the nucleus. It is found in the cytoplasm. Its function is as follows. Probable transcriptional repressor that regulates multiple aspects of plant growth and development, partly through brassinosteroid (BR) signaling pathway. Acts downstream of the kinase GSK2, a negative regulator of BR signaling. The polypeptide is Transcription repressor OFP8 (Oryza sativa subsp. japonica (Rice)).